The chain runs to 446 residues: Tubulin beta-2 chain (446 aa).

Residues Q11, E69, S138, G142, T143, G144, N204, and N226 each coordinate GTP. Position 69 (E69) interacts with Mg(2+).

Belongs to the tubulin family. As to quaternary structure, dimer of alpha and beta chains. A typical microtubule is a hollow water-filled tube with an outer diameter of 25 nm and an inner diameter of 15 nM. Alpha-beta heterodimers associate head-to-tail to form protofilaments running lengthwise along the microtubule wall with the beta-tubulin subunit facing the microtubule plus end conferring a structural polarity. Microtubules usually have 13 protofilaments but different protofilament numbers can be found in some organisms and specialized cells. Mg(2+) is required as a cofactor.

It is found in the cytoplasm. Its subcellular location is the cytoskeleton. Functionally, tubulin is the major constituent of microtubules, a cylinder consisting of laterally associated linear protofilaments composed of alpha- and beta-tubulin heterodimers. Microtubules grow by the addition of GTP-tubulin dimers to the microtubule end, where a stabilizing cap forms. Below the cap, tubulin dimers are in GDP-bound state, owing to GTPase activity of alpha-tubulin. This Hypocrea rufa (Trichoderma viride) protein is Tubulin beta-2 chain (tub2).